The sequence spans 445 residues: Phosphoglucosamine mutase (445 aa).

Serine 102 (phosphoserine intermediate) is an active-site residue. Residues serine 102, aspartate 241, aspartate 243, and aspartate 245 each contribute to the Mg(2+) site. Position 102 is a phosphoserine (serine 102).

Belongs to the phosphohexose mutase family. Mg(2+) serves as cofactor. Activated by phosphorylation.

The enzyme catalyses alpha-D-glucosamine 1-phosphate = D-glucosamine 6-phosphate. Its function is as follows. Catalyzes the conversion of glucosamine-6-phosphate to glucosamine-1-phosphate. The polypeptide is Phosphoglucosamine mutase (Rhodococcus jostii (strain RHA1)).